Here is a 93-residue protein sequence, read N- to C-terminus: uncharacterized protein (93 aa).

Positions 35 to 72 are disordered; the sequence is KSVPPPTPPKPVKKTPSPTLPKPSKQKQEPQVEVNEDR. Residues 60–72 are compositionally biased toward basic and acidic residues; it reads QKQEPQVEVNEDR.

This is an uncharacterized protein from Ostreid herpesvirus 1 (isolate France) (OsHV-1).